Reading from the N-terminus, the 620-residue chain is MPKLRSATSTQGRNMAGARALWRATGMTDGDFGKPIIAVVNSFTQFVPGHVHLKDMGQLVAGAIEEAGGVAKEFNTIAVDDGIAMGHSGMLYSLPSRDLIADSVEYMVNAHCADAMVCISNCDKITPGMMMAAMRLNIPVIFVSGGPMEAGKTKLSDQIIKLDLVDAMIKGADPTVSDEDSDKIERSACPTCGSCSGMFTANSMNCLAEALGLALPGNGSMLATHADREQLFLKAGKQIVELTKRYYQDNDESALPRNIACKEALHNAMCLDIAMGGSTNTILHLLATAQEAEIDYTMEDMDKLSRIVPQLCKVAPSTPEYHMEDVHRAGGVISILGELSRAGLLKTDVPNVLGTTLADVIAKYDITLTDDEDIKKFYRAGPAGIRTTKAFSQDCRWDTLDDDRVNGCIRNLENAFSLEGGLAVLSGNIAVDGCVVKTAGVSDDNLVFTGPAHIFESQDDAVAGVLDGKVVAGEVVVIRYEGPKGGPGMQEMLYPTTYLKSMGLGKACALLTDGRFSGGTSGLSIGHVSPEAADGGTIALVEQGDIIHIDIPTREITLQVSEEVLEERRAAMISKGKQAWKPADRVRPISYALKNYAMLATSADKGAVRNRDLLDGLVDK.

Aspartate 81 is a binding site for Mg(2+). Position 122 (cysteine 122) interacts with [2Fe-2S] cluster. Mg(2+)-binding residues include aspartate 123 and lysine 124. Lysine 124 bears the N6-carboxylysine mark. Cysteine 195 lines the [2Fe-2S] cluster pocket. A Mg(2+)-binding site is contributed by glutamate 491. Serine 517 serves as the catalytic Proton acceptor.

Belongs to the IlvD/Edd family. As to quaternary structure, homodimer. The cofactor is [2Fe-2S] cluster. Mg(2+) is required as a cofactor.

It carries out the reaction (2R)-2,3-dihydroxy-3-methylbutanoate = 3-methyl-2-oxobutanoate + H2O. The enzyme catalyses (2R,3R)-2,3-dihydroxy-3-methylpentanoate = (S)-3-methyl-2-oxopentanoate + H2O. The protein operates within amino-acid biosynthesis; L-isoleucine biosynthesis; L-isoleucine from 2-oxobutanoate: step 3/4. Its pathway is amino-acid biosynthesis; L-valine biosynthesis; L-valine from pyruvate: step 3/4. Its function is as follows. Functions in the biosynthesis of branched-chain amino acids. Catalyzes the dehydration of (2R,3R)-2,3-dihydroxy-3-methylpentanoate (2,3-dihydroxy-3-methylvalerate) into 2-oxo-3-methylpentanoate (2-oxo-3-methylvalerate) and of (2R)-2,3-dihydroxy-3-methylbutanoate (2,3-dihydroxyisovalerate) into 2-oxo-3-methylbutanoate (2-oxoisovalerate), the penultimate precursor to L-isoleucine and L-valine, respectively. The chain is Dihydroxy-acid dehydratase from Colwellia psychrerythraea (strain 34H / ATCC BAA-681) (Vibrio psychroerythus).